Here is a 301-residue protein sequence, read N- to C-terminus: Mitochondrial carnitine/acylcarnitine carrier protein (301 aa).

The residue at position 2 (alanine 2) is an N-acetylalanine. Over 2–12 (ADEPKPISPFK) the chain is Cytoplasmic. Solcar repeat units lie at residues 8–99 (ISPF…GKKL), 108–196 (LSYP…LKNL), and 207–293 (LSVP…AMKF). Residues 13–31 (NLLAGGFGGMCLVFVGHPL) form a helical membrane-spanning segment. Residues 32–73 (DTVKVRLQTQPPSLSGQPPMYSGTLDCFRKTLMREGITGLYR) lie on the Mitochondrial matrix side of the membrane. The chain crosses the membrane as a helical span at residues 74–93 (GMAAPIIGVTPMFAVCFFGF). Residues 94–112 (GLGKKLQQKSPEDELSYPQ) are Cytoplasmic-facing. Residues 113 to 131 (LFTAGMLSGVFTTGIMTPG) form a helical membrane-spanning segment. At 132 to 170 (ERIKCLLQIQASSGENKYSGTLDCAKKLYQEFGIRGFYK) the chain is on the mitochondrial matrix side. 2 positions are modified to N6-acetyllysine: lysine 148 and lysine 157. Lysine 170 is subject to N6-acetyllysine; alternate. N6-succinyllysine; alternate is present on lysine 170. The chain crosses the membrane as a helical span at residues 171–190 (GTVLTLMRDVPASGMYFMTY). The Cytoplasmic portion of the chain corresponds to 191-211 (EWLKNLFTPEGKSVSDLSVPR). The helical transmembrane segment at 212–230 (ILVAGGFAGIFNWAVAIPP) threads the bilayer. The Mitochondrial matrix portion of the chain corresponds to 231 to 267 (DVLKSRFQTAPPGKYPNGFRDVLRELIREEGVTSLYK). Residues 268–287 (GFNAVMIRAFPANAACFLGF) form a helical membrane-spanning segment. Over 288–301 (EIAMKFLNWIAPNL) the chain is Cytoplasmic.

Belongs to the mitochondrial carrier (TC 2.A.29) family. Widely expressed, with highest levels in the liver, intermediate levels in heart, testis and kidney and low levels in brain, including cortex, cerebellum, hippocampus and hypothalamus.

The protein resides in the mitochondrion inner membrane. It carries out the reaction O-acetyl-(R)-carnitine(in) + (R)-carnitine(out) = O-acetyl-(R)-carnitine(out) + (R)-carnitine(in). It catalyses the reaction an O-acyl-(R)-carnitine(in) + (R)-carnitine(out) = an O-acyl-(R)-carnitine(out) + (R)-carnitine(in). The catalysed reaction is O-propanoyl-(R)-carnitine(in) + (R)-carnitine(out) = O-propanoyl-(R)-carnitine(out) + (R)-carnitine(in). The enzyme catalyses O-hexadecanoyl-(R)-carnitine(in) + (R)-carnitine(out) = O-hexadecanoyl-(R)-carnitine(out) + (R)-carnitine(in). It carries out the reaction O-octanoyl-(R)-carnitine(in) + (R)-carnitine(out) = O-octanoyl-(R)-carnitine(out) + (R)-carnitine(in). It catalyses the reaction (R)-carnitine(in) = (R)-carnitine(out). Mediates the electroneutral exchange of acylcarnitines (O-acyl-(R)-carnitine or L-acylcarnitine) of different acyl chain lengths (ranging from O-acetyl-(R)-carnitine to long-chain O-acyl-(R)-carnitines) with free carnitine ((R)-carnitine or L-carnitine) across the mitochondrial inner membrane, via a ping-pong mechanism. Key player in the mitochondrial oxidation pathway, it translocates the fatty acids in the form of acylcarnitines into the mitochondrial matrix, where the carnitine palmitoyltransferase 2 (CPT-2) activates them to undergo fatty acid beta-oxidation. Catalyzes the unidirectional transport (uniport) of carnitine at lower rates than the antiport (exchange). This chain is Mitochondrial carnitine/acylcarnitine carrier protein, found in Mus musculus (Mouse).